Reading from the N-terminus, the 364-residue chain is Cell division protein FtsZ 1 (364 aa).

GTP-binding positions include 47–48 (GA), 97–99 (AGG), 134–136 (GTG), Glu-165, Arg-169, and Asp-212.

It belongs to the FtsZ family. As to quaternary structure, homodimer. Polymerizes to form a dynamic ring structure in a strictly GTP-dependent manner. Interacts directly with several other division proteins.

The protein resides in the cytoplasm. Essential cell division protein that forms a contractile ring structure (Z ring) at the future cell division site. The regulation of the ring assembly controls the timing and the location of cell division. One of the functions of the FtsZ ring is to recruit other cell division proteins to the septum to produce a new cell wall between the dividing cells. Binds GTP and shows GTPase activity. This chain is Cell division protein FtsZ 1, found in Methanocaldococcus jannaschii (strain ATCC 43067 / DSM 2661 / JAL-1 / JCM 10045 / NBRC 100440) (Methanococcus jannaschii).